A 401-amino-acid polypeptide reads, in one-letter code: Imidazolonepropionase (401 aa).

Fe(3+) is bound by residues His66 and His68. His66 and His68 together coordinate Zn(2+). Arg75, Tyr138, and His171 together coordinate 4-imidazolone-5-propanoate. Residue Tyr138 coordinates N-formimidoyl-L-glutamate. His236 contacts Fe(3+). Zn(2+) is bound at residue His236. Residue Gln239 participates in 4-imidazolone-5-propanoate binding. Asp311 lines the Fe(3+) pocket. Asp311 contacts Zn(2+). 2 residues coordinate N-formimidoyl-L-glutamate: Asn313 and Gly315. Thr316 contacts 4-imidazolone-5-propanoate.

The protein belongs to the metallo-dependent hydrolases superfamily. HutI family. It depends on Zn(2+) as a cofactor. Fe(3+) serves as cofactor.

Its subcellular location is the cytoplasm. It carries out the reaction 4-imidazolone-5-propanoate + H2O = N-formimidoyl-L-glutamate. It participates in amino-acid degradation; L-histidine degradation into L-glutamate; N-formimidoyl-L-glutamate from L-histidine: step 3/3. Catalyzes the hydrolytic cleavage of the carbon-nitrogen bond in imidazolone-5-propanoate to yield N-formimidoyl-L-glutamate. It is the third step in the universal histidine degradation pathway. This chain is Imidazolonepropionase, found in Pseudomonas putida (strain GB-1).